Reading from the N-terminus, the 72-residue chain is Alpha-elapitoxin-Djk2a (72 aa).

Intrachain disulfides connect cysteine 3–cysteine 21, cysteine 14–cysteine 42, cysteine 27–cysteine 31, cysteine 46–cysteine 57, and cysteine 58–cysteine 63.

Belongs to the three-finger toxin family. Long-chain subfamily. Type II alpha-neurotoxin sub-subfamily. In terms of tissue distribution, expressed by the venom gland.

It is found in the secreted. Its function is as follows. Binds with high affinity to muscular (alpha-1/CHRNA1) and neuronal (alpha-7/CHRNA7) nicotinic acetylcholine receptor (nAChR) and inhibits acetylcholine from binding to the receptor, thereby impairing neuromuscular and neuronal transmission. In Dendroaspis jamesoni kaimosae (Eastern Jameson's mamba), this protein is Alpha-elapitoxin-Djk2a.